The sequence spans 291 residues: 4-hydroxy-tetrahydrodipicolinate synthase (291 aa).

Pyruvate is bound at residue Thr44. Residue Tyr132 is the Proton donor/acceptor of the active site. Lys160 (schiff-base intermediate with substrate) is an active-site residue. Pyruvate is bound at residue Ile202.

The protein belongs to the DapA family. Homotetramer; dimer of dimers.

Its subcellular location is the cytoplasm. It catalyses the reaction L-aspartate 4-semialdehyde + pyruvate = (2S,4S)-4-hydroxy-2,3,4,5-tetrahydrodipicolinate + H2O + H(+). It participates in amino-acid biosynthesis; L-lysine biosynthesis via DAP pathway; (S)-tetrahydrodipicolinate from L-aspartate: step 3/4. Catalyzes the condensation of (S)-aspartate-beta-semialdehyde [(S)-ASA] and pyruvate to 4-hydroxy-tetrahydrodipicolinate (HTPA). This is 4-hydroxy-tetrahydrodipicolinate synthase from Roseobacter denitrificans (strain ATCC 33942 / OCh 114) (Erythrobacter sp. (strain OCh 114)).